A 101-amino-acid polypeptide reads, in one-letter code: NAD(P)H-quinone oxidoreductase subunit 4L, chloroplastic (101 aa).

The next 3 helical transmembrane spans lie at Met-2–Ile-22, Met-32–Phe-52, and Ile-61–Val-81.

Belongs to the complex I subunit 4L family. NDH is composed of at least 16 different subunits, 5 of which are encoded in the nucleus.

The protein resides in the plastid. It localises to the chloroplast thylakoid membrane. It catalyses the reaction a plastoquinone + NADH + (n+1) H(+)(in) = a plastoquinol + NAD(+) + n H(+)(out). The enzyme catalyses a plastoquinone + NADPH + (n+1) H(+)(in) = a plastoquinol + NADP(+) + n H(+)(out). Its function is as follows. NDH shuttles electrons from NAD(P)H:plastoquinone, via FMN and iron-sulfur (Fe-S) centers, to quinones in the photosynthetic chain and possibly in a chloroplast respiratory chain. The immediate electron acceptor for the enzyme in this species is believed to be plastoquinone. Couples the redox reaction to proton translocation, and thus conserves the redox energy in a proton gradient. The protein is NAD(P)H-quinone oxidoreductase subunit 4L, chloroplastic of Panax ginseng (Korean ginseng).